Here is a 528-residue protein sequence, read N- to C-terminus: uncharacterized protein (528 aa).

2 stretches are compositionally biased toward basic residues: residues 1 to 16 (MGKA…KNHL) and 25 to 43 (QLAR…SHTK). A disordered region spans residues 1 to 59 (MGKASKATKKFTKNHLKNTIERRKQLARSKKVYGTKNRNSHTKNKLESGTNDNNKNKED).

This sequence belongs to the NOC2 family.

The protein localises to the nucleus. Its subcellular location is the nucleolus. This is an uncharacterized protein from Schizosaccharomyces pombe (strain 972 / ATCC 24843) (Fission yeast).